The chain runs to 382 residues: tRNA-specific 2-thiouridylase MnmA (382 aa).

ATP-binding positions include alanine 34–serine 41 and leucine 60. Cysteine 128 serves as the catalytic Nucleophile. A disulfide bond links cysteine 128 and cysteine 224. Residue glycine 152 participates in ATP binding. Positions arginine 174 to glutamine 176 are interaction with tRNA. The active-site Cysteine persulfide intermediate is cysteine 224.

Belongs to the MnmA/TRMU family.

The protein localises to the cytoplasm. It catalyses the reaction S-sulfanyl-L-cysteinyl-[protein] + uridine(34) in tRNA + AH2 + ATP = 2-thiouridine(34) in tRNA + L-cysteinyl-[protein] + A + AMP + diphosphate + H(+). Functionally, catalyzes the 2-thiolation of uridine at the wobble position (U34) of tRNA, leading to the formation of s(2)U34. The protein is tRNA-specific 2-thiouridylase MnmA of Sphingopyxis alaskensis (strain DSM 13593 / LMG 18877 / RB2256) (Sphingomonas alaskensis).